The sequence spans 279 residues: Bifunctional protein FolD (279 aa).

Residues G165–S167, S190, and I231 each bind NADP(+).

This sequence belongs to the tetrahydrofolate dehydrogenase/cyclohydrolase family. Homodimer.

The enzyme catalyses (6R)-5,10-methylene-5,6,7,8-tetrahydrofolate + NADP(+) = (6R)-5,10-methenyltetrahydrofolate + NADPH. The catalysed reaction is (6R)-5,10-methenyltetrahydrofolate + H2O = (6R)-10-formyltetrahydrofolate + H(+). It participates in one-carbon metabolism; tetrahydrofolate interconversion. Functionally, catalyzes the oxidation of 5,10-methylenetetrahydrofolate to 5,10-methenyltetrahydrofolate and then the hydrolysis of 5,10-methenyltetrahydrofolate to 10-formyltetrahydrofolate. The chain is Bifunctional protein FolD from Halalkalibacterium halodurans (strain ATCC BAA-125 / DSM 18197 / FERM 7344 / JCM 9153 / C-125) (Bacillus halodurans).